Reading from the N-terminus, the 26-residue chain is Superoxide dismutase [Cu-Zn] (26 aa).

Cys7 carries the S-palmitoyl cysteine lipid modification.

The protein belongs to the Cu-Zn superoxide dismutase family. As to quaternary structure, homotrimer. The cofactor is Cu cation. Zn(2+) is required as a cofactor.

The protein localises to the cytoplasm. The protein resides in the nucleus. The catalysed reaction is 2 superoxide + 2 H(+) = H2O2 + O2. Its function is as follows. Destroys radicals which are normally produced within the cells and which are toxic to biological systems. This chain is Superoxide dismutase [Cu-Zn] (sod1), found in Paralichthys olivaceus (Bastard halibut).